Here is a 361-residue protein sequence, read N- to C-terminus: MLWSYPEGFAYFNEFAQSIIWEPVAFSYALLISGADLLLLAALALLSGYLRRAIPMFLILGLSFFSVILLGPLADLALPHRATEILTRPHLASTEMHPGISVMALYGGLLWPLTFIVALIFALLYFSYPMHKKGGTFSFLSFGVKSEESYERLKPAMKVLAAILVPLSALWTIYPGMLFFSQTWIYAWKNWGLMLPMFFGETFITATGTALILYYLERMEDERIRYPLLQIHGAAAIALAGVLILQMFIWGMWGNPNFAAVVPMMQAAAVIFLLTFILTLVSAKYEAITPIVPVLALFGVVVNKWNLIINGQLISRAGMGVLEPELAPNWLAEAVSPIALAILLLVILSYIFPMEVEEDAA.

A run of 9 helical transmembrane segments spans residues 26–46, 53–73, 104–124, 160–180, 193–213, 233–253, 258–278, 288–308, and 334–354; these read FSYA…LALL, AIPM…LGPL, ALYG…FALL, LAAI…MLFF, LMLP…ALIL, GAAA…WGMW, FAAV…TFIL, ITPI…WNLI, and AVSP…IFPM.

Belongs to the NrfD family. As to quaternary structure, probably composed of three subunits: TtrA, TtrB and TtrC.

Its subcellular location is the cell membrane. Its function is as follows. Part of a membrane-bound tetrathionate reductase that catalyzes the reduction of tetrathionate to thiosulfate. TtrC probably anchors TtrA and TtrB to the external face of the cytoplasmic membrane. May transfer electrons from membrane quinol to TtrB. This chain is Tetrathionate reductase subunit C (ttrC), found in Archaeoglobus fulgidus (strain ATCC 49558 / DSM 4304 / JCM 9628 / NBRC 100126 / VC-16).